Reading from the N-terminus, the 362-residue chain is 3-dehydroquinate synthase (362 aa).

NAD(+) contacts are provided by residues 72–77 (DGEQYK), 106–110 (GVVGD), 130–131 (TT), Lys143, Lys152, and 170–173 (CLKT). 3 residues coordinate Zn(2+): Glu185, His248, and His265.

Belongs to the sugar phosphate cyclases superfamily. Dehydroquinate synthase family. The cofactor is Co(2+). Zn(2+) is required as a cofactor. Requires NAD(+) as cofactor.

The protein resides in the cytoplasm. It catalyses the reaction 7-phospho-2-dehydro-3-deoxy-D-arabino-heptonate = 3-dehydroquinate + phosphate. Its pathway is metabolic intermediate biosynthesis; chorismate biosynthesis; chorismate from D-erythrose 4-phosphate and phosphoenolpyruvate: step 2/7. Its function is as follows. Catalyzes the conversion of 3-deoxy-D-arabino-heptulosonate 7-phosphate (DAHP) to dehydroquinate (DHQ). The protein is 3-dehydroquinate synthase of Aliivibrio fischeri (strain ATCC 700601 / ES114) (Vibrio fischeri).